The following is a 281-amino-acid chain: Glycerol uptake facilitator protein (281 aa).

Over 1-5 the chain is Cytoplasmic; sequence MSQTS. A helical transmembrane segment spans residues 6-34; the sequence is TLKGQCIAEFLGTGLLIFFGVGCVAALKV. At 35–39 the chain is on the periplasmic side; the sequence is AGASF. The helical transmembrane segment at 40–60 threads the bilayer; the sequence is GQWEISVIWGLGVAMAIYLTA. Over 61–63 the chain is Cytoplasmic; the sequence is GVS. The stretch at 64–67 is an intramembrane region; it reads GAHL. Positions 68 to 70 match the NPA 1 motif; it reads NPA. The segment at residues 68–78 is an intramembrane region (helical); that stretch reads NPAVTIALWLF. Residues 79–84 are Cytoplasmic-facing; the sequence is ACFDKR. A helical membrane pass occupies residues 85 to 108; the sequence is KVIPFIVSQVAGAFCAAALVYGLY. The Periplasmic portion of the chain corresponds to 109–143; it reads YNLFFDFEQTHHIVRGSVESVDLAGTFSTYPNPHI. The chain crosses the membrane as a helical span at residues 144 to 169; the sequence is NFVQAFAVEMVITAILMGLILALTDD. At 170-177 the chain is on the cytoplasmic side; it reads GNGVPRGP. Residues 178 to 194 form a helical membrane-spanning segment; that stretch reads LAPLLIGLLIAVIGASM. At 195–198 the chain is on the periplasmic side; the sequence is GPLT. The stretch at 199–202 is an intramembrane region; the sequence is GFAM. The NPA 2 motif lies at 203–205; that stretch reads NPA. An intramembrane region (helical) is located at residues 203-216; it reads NPARDFGPKVFAWL. Residues 217 to 231 are Periplasmic-facing; that stretch reads AGWGNVAFTGGRDIP. The chain crosses the membrane as a helical span at residues 232-254; it reads YFLVPLFGPIVGAIVGAFAYRKL. At 255–281 the chain is on the cytoplasmic side; sequence IGRHLPCDICVVEEKETTTPSEQKASL.

Belongs to the MIP/aquaporin (TC 1.A.8) family. Homotetramer.

It localises to the cell inner membrane. It carries out the reaction glycerol(in) = glycerol(out). In terms of biological role, mediates glycerol diffusion across the cytoplasmic membrane via a pore-type mechanism. This chain is Glycerol uptake facilitator protein (glpF), found in Escherichia coli O157:H7.